Here is a 344-residue protein sequence, read N- to C-terminus: GTPase Obg (344 aa).

In terms of domain architecture, Obg spans 1-159 (MKFLDEAKVY…MWLILRLKLI (159 aa)). One can recognise an OBG-type G domain in the interval 160-327 (ADAGLVGLPN…ALRAIQAQLD (168 aa)). Residues 166-173 (GLPNAGKS), 191-195 (FTTLH), 212-215 (DIPG), 279-282 (SKAD), and 308-310 (SAA) each bind GTP. S173 and T193 together coordinate Mg(2+).

This sequence belongs to the TRAFAC class OBG-HflX-like GTPase superfamily. OBG GTPase family. Monomer. Mg(2+) serves as cofactor.

The protein resides in the cytoplasm. In terms of biological role, an essential GTPase which binds GTP, GDP and possibly (p)ppGpp with moderate affinity, with high nucleotide exchange rates and a fairly low GTP hydrolysis rate. Plays a role in control of the cell cycle, stress response, ribosome biogenesis and in those bacteria that undergo differentiation, in morphogenesis control. The chain is GTPase Obg from Methylorubrum extorquens (strain CM4 / NCIMB 13688) (Methylobacterium extorquens).